The chain runs to 251 residues: MSFTVVIPARYQSTRLPGKPLADIAGKPMVQWVYEQAIQAGAQDVIIATDDQRVADAVAVFGGKVCMTSPNHESGTERLAEVVQLMGIADDHIVVNVQGDEPLIPPSIIRQVAENLAASSAPMATLGVAITSEEEVFNPNAVKVVTDKEGYALYFSRATIPWDRDAFARGEVLTEHSLMRHIGIYAYRAGFINTYVNWQPSSLEKIECLEQLRVLWYGEKIHVELAKEAPPAGVDTPEDLELVRKIIAAKS.

This sequence belongs to the KdsB family.

The protein resides in the cytoplasm. The enzyme catalyses 3-deoxy-alpha-D-manno-oct-2-ulosonate + CTP = CMP-3-deoxy-beta-D-manno-octulosonate + diphosphate. Its pathway is nucleotide-sugar biosynthesis; CMP-3-deoxy-D-manno-octulosonate biosynthesis; CMP-3-deoxy-D-manno-octulosonate from 3-deoxy-D-manno-octulosonate and CTP: step 1/1. It functions in the pathway bacterial outer membrane biogenesis; lipopolysaccharide biosynthesis. Its function is as follows. Activates KDO (a required 8-carbon sugar) for incorporation into bacterial lipopolysaccharide in Gram-negative bacteria. In Vibrio vulnificus (strain YJ016), this protein is 3-deoxy-manno-octulosonate cytidylyltransferase.